A 64-amino-acid chain; its full sequence is SPbeta prophage-derived uncharacterized protein YoqI (64 aa).

This Bacillus subtilis (strain 168) protein is SPbeta prophage-derived uncharacterized protein YoqI (yoqI).